A 166-amino-acid polypeptide reads, in one-letter code: MASGVTVNDEVIKVFNDMKVRKSSTQEEIKKRKKAVLFCLSDDKRQIIVEEAKQILVGDIGDTVEDPYTSFVKLLPLNDCRYALYDATYETKESKKEDLVFIFWAPESAPLKSKMIYASSKDAIKKKFTGIKHEWQVNGLDDIKDRSTLGEKLGGSVVVSLEGKPL.

A2 is subject to N-acetylalanine. S3 is subject to Phosphoserine. The ADF-H domain occupies 4–153 (GVTVNDEVIK…KDRSTLGEKL (150 aa)). At T6 the chain carries Phosphothreonine. The short motif at 30 to 34 (KKRKK) is the Nuclear localization signal element.

It belongs to the actin-binding proteins ADF family. As to quaternary structure, interacts with CSRP3; possibly two molecules of CFL2 can interact with one molecule if CSRP3. In terms of processing, the phosphorylation of Ser-24 may prevent recognition of the nuclear localization signal. As to expression, predominantly expressed in skeletal muscle.

Its subcellular location is the nucleus matrix. The protein localises to the cytoplasm. The protein resides in the cytoskeleton. Its function is as follows. Controls reversibly actin polymerization and depolymerization in a pH-sensitive manner. It has the ability to bind G- and F-actin in a 1:1 ratio of cofilin to actin. It is the major component of intranuclear and cytoplasmic actin rods. Required for muscle maintenance. May play a role during the exchange of alpha-actin forms during the early postnatal remodeling of the sarcomere. The chain is Cofilin-2 (Cfl2) from Mus musculus (Mouse).